A 224-amino-acid polypeptide reads, in one-letter code: Giant hemoglobin linker AV-1 chain (224 aa).

The LDL-receptor class A domain occupies 62 to 103 (HWCPSKYHRCGNSPQCMSNMAFCDGVNDCKNHFDEDENRCVV). Disulfide bonds link C64-C77, C71-C90, and C84-C101. An N-linked (GlcNAc...) asparagine glycan is attached at N108.

In terms of assembly, giant hemoglobin is composed of four heme-containing chains (AI to AIV), and two linker chains (AV and AVI).

Functionally, acts as a linker for the assembly of heme-containing chains in the construction of giant hemoglobin. The polypeptide is Giant hemoglobin linker AV-1 chain (Lamellibrachia sp. (Deep-sea giant tube worm)).